A 176-amino-acid chain; its full sequence is ATP synthase subunit b (176 aa).

A helical transmembrane segment spans residues 26-45; the sequence is VINLAIIIGVLVYFGRGLLG.

It belongs to the ATPase B chain family. F-type ATPases have 2 components, F(1) - the catalytic core - and F(0) - the membrane proton channel. F(1) has five subunits: alpha(3), beta(3), gamma(1), delta(1), epsilon(1). F(0) has four main subunits: a(1), b(1), b'(1) and c(10-14). The alpha and beta chains form an alternating ring which encloses part of the gamma chain. F(1) is attached to F(0) by a central stalk formed by the gamma and epsilon chains, while a peripheral stalk is formed by the delta, b and b' chains.

The protein localises to the cellular thylakoid membrane. Functionally, f(1)F(0) ATP synthase produces ATP from ADP in the presence of a proton or sodium gradient. F-type ATPases consist of two structural domains, F(1) containing the extramembraneous catalytic core and F(0) containing the membrane proton channel, linked together by a central stalk and a peripheral stalk. During catalysis, ATP synthesis in the catalytic domain of F(1) is coupled via a rotary mechanism of the central stalk subunits to proton translocation. In terms of biological role, component of the F(0) channel, it forms part of the peripheral stalk, linking F(1) to F(0). The protein is ATP synthase subunit b of Synechococcus sp. (strain PCC 6716).